The following is a 354-amino-acid chain: Guanine nucleotide-binding protein G(i) subunit alpha (354 aa).

Glycine 2 is lipidated: N-myristoyl glycine. Residue cysteine 3 is the site of S-palmitoyl cysteine attachment. In terms of domain architecture, G-alpha spans 32–354; it reads REVKLLLLGA…KNNLKDCGLF (323 aa). Positions 35-48 are G1 motif; sequence KLLLLGAGESGKST. GTP is bound by residues 40 to 47, 175 to 181, 200 to 204, 269 to 272, and alanine 326; these read GAGESGKS, LRTRVKT, DVGGQ, and NKKD. Mg(2+)-binding residues include serine 47 and threonine 181. The segment at 173-181 is G2 motif; the sequence is DVLRTRVKT. The interval 196 to 205 is G3 motif; that stretch reads FKMFDVGGQR. Positions 265 to 272 are G4 motif; it reads ILFLNKKD. The tract at residues 324–329 is G5 motif; sequence TCATDT.

The protein belongs to the G-alpha family. G(i/o/t/z) subfamily. G proteins are composed of 3 units; alpha, beta and gamma. The alpha chain contains the guanine nucleotide binding site.

Its function is as follows. Guanine nucleotide-binding proteins (G proteins) are involved as modulators or transducers in various transmembrane signaling systems. This G protein is involved in 1-methyladenine-induced oocyte maturation. The chain is Guanine nucleotide-binding protein G(i) subunit alpha from Patiria pectinifera (Starfish).